The chain runs to 490 residues: Cytochrome P450 71B28 (490 aa).

Residues 1-21 (MSVFLCFLCLLPLILIFLKNL) traverse the membrane as a helical segment. Cys-440 contributes to the heme binding site.

This sequence belongs to the cytochrome P450 family. Requires heme as cofactor.

Its subcellular location is the membrane. This chain is Cytochrome P450 71B28 (CYP71B28), found in Arabidopsis thaliana (Mouse-ear cress).